Reading from the N-terminus, the 269-residue chain is Gene 51 glycoprotein (269 aa).

Residues asparagine 53, asparagine 58, asparagine 74, and asparagine 78 are each glycosylated (N-linked (GlcNAc...) asparagine; by host). Disordered stretches follow at residues 67–87 (LSTS…TTPY) and 103–137 (MLNS…ASKN). Over residues 76–87 (TSNTSYSQTTPY) the composition is skewed to low complexity. A compositionally biased stretch (polar residues) spans 103–112 (MLNSTPNKPL). Positions 113–136 (SSTKLTPKSQSSSQSTKTTKQASK) are enriched in low complexity. 4 N-linked (GlcNAc...) asparagine; by host glycosylation sites follow: asparagine 137, asparagine 161, asparagine 170, and asparagine 191.

The protein is Gene 51 glycoprotein (51) of Saimiriine herpesvirus 2 (strain 11) (SaHV-2).